The chain runs to 591 residues: A-type ATP synthase subunit A (591 aa).

Position 233-240 (233-240 (GPFGSGKT)) interacts with ATP.

Belongs to the ATPase alpha/beta chains family. In terms of assembly, has multiple subunits with at least A(3), B(3), C, D, E, F, H, I and proteolipid K(x).

The protein resides in the cell membrane. The enzyme catalyses ATP + H2O + 4 H(+)(in) = ADP + phosphate + 5 H(+)(out). Component of the A-type ATP synthase that produces ATP from ADP in the presence of a proton gradient across the membrane. The A chain is the catalytic subunit. This Metallosphaera sedula (strain ATCC 51363 / DSM 5348 / JCM 9185 / NBRC 15509 / TH2) protein is A-type ATP synthase subunit A.